The following is a 343-amino-acid chain: MDESGAGRRKEDHIDIVLAGGRVASRLDAGFDRVRFVHCALPELDLDAIDLSTRFLGRPLKAPFLISAMTGGPARAESINAHLAEAAQALGIALGVGSQRIAIEDGSAGGLGADLRRRAPDIALFANLGAAQLLAARGLDAARRAVEMIGADVLVIHLNPLQEAIQQGGDRDWRGVFDRIGSLCVSLSAPVVVKEVGFGLSGAVARRLADCGVAALDVAGAGGTNWALVEGERGTGRSRAVATAFADWGIPTAQAVVEVRAACPDLPLIASGGVRHGVDAAKAIRLGADLVGQAAGTLKAAITSTEAVVEHFSQMTDQLRIACFATGAADLDALRRVPLATMD.

9–10 contributes to the substrate binding site; that stretch reads RK. Residues S67, 68–70, S98, and N127 contribute to the FMN site; that span reads AMT. Residue 98 to 100 coordinates substrate; it reads SQR. Q162 is a binding site for substrate. E163 serves as a coordination point for Mg(2+). Residues K194, T224, 273–275, and 294–295 contribute to the FMN site; these read GVR and AA.

The protein belongs to the IPP isomerase type 2 family. Homooctamer. Dimer of tetramers. FMN serves as cofactor. Requires NADPH as cofactor. Mg(2+) is required as a cofactor.

The protein resides in the cytoplasm. It carries out the reaction isopentenyl diphosphate = dimethylallyl diphosphate. Functionally, involved in the biosynthesis of isoprenoids. Catalyzes the 1,3-allylic rearrangement of the homoallylic substrate isopentenyl (IPP) to its allylic isomer, dimethylallyl diphosphate (DMAPP). The chain is Isopentenyl-diphosphate delta-isomerase from Xanthobacter autotrophicus (strain ATCC BAA-1158 / Py2).